The primary structure comprises 427 residues: Transcobalamin-2 (427 aa).

An N-terminal signal peptide occupies residues 1–18; the sequence is MELLKALLLLSGVLGALA. Intrachain disulfides connect Cys21–Cys268, Cys116–Cys310, and Cys165–Cys208. Residues 152–156, His193, 193–197, Asn245, Ser248, Gln292, and 395–397 each bind cob(II)alamin; these read TSYYQ, HLSVD, and WQL.

It belongs to the eukaryotic cobalamin transport proteins family. As to quaternary structure, interacts with CD320 (via LDL-receptor class A domains).

The protein resides in the secreted. In terms of biological role, primary vitamin B12-binding and transport protein. Delivers cobalamin to cells. The polypeptide is Transcobalamin-2 (Tcn2) (Rattus norvegicus (Rat)).